The following is a 152-amino-acid chain: Interleukin-1 family member 10 (152 aa).

The protein belongs to the IL-1 family. Interacts with cargo receptor TMED10; the interaction mediates the translocation from the cytoplasm into the ERGIC (endoplasmic reticulum-Golgi intermediate compartment) and thereby secretion.

The protein resides in the cytoplasm. It is found in the endoplasmic reticulum-Golgi intermediate compartment. Its subcellular location is the secreted. Cytokine with immunomodulatory activity. Alone, does not induce cytokine production, but reduces IL22 and IL17A production by T-cells in response to heat-killed Candida albicans. Reduces IL36G-induced production of IL8 by peripheral blood mononuclear cells. Increases IL6 production by dendritic cells stimulated by bacterial lipopolysaccharides (LPS). Ligand for IL-36R/IL1RL2. The polypeptide is Interleukin-1 family member 10 (Il1f10) (Mus musculus (Mouse)).